The sequence spans 402 residues: Type II NADH:quinone oxidoreductase (402 aa).

Residues 12-16 (GAGYA), 39-40 (NK), and Val-83 contribute to the FAD site. The active site involves Glu-172. Residues Asp-302, 319 to 320 (AQ), and Lys-379 each bind FAD.

Belongs to the NADH dehydrogenase family. Requires FAD as cofactor.

It is found in the cell membrane. The catalysed reaction is a quinone + NADH + H(+) = a quinol + NAD(+). Functionally, alternative, nonproton pumping NADH:quinone oxidoreductase that delivers electrons to the respiratory chain by oxidation of NADH and reduction of quinones, and contributes to the regeneration of NAD(+). The polypeptide is Type II NADH:quinone oxidoreductase (Staphylococcus epidermidis (strain ATCC 12228 / FDA PCI 1200)).